The sequence spans 72 residues: Sec-independent protein translocase protein TatA (72 aa).

The helical transmembrane segment at 1 to 21 (MPFGLGLPEILVIGVIALLIF) threads the bilayer. Residues 41–72 (KSGVSDEPAPQQSASKETAPNPPQSLPSGKDS) are disordered.

The protein belongs to the TatA/E family. As to quaternary structure, forms a complex with TatC.

It localises to the cell inner membrane. Functionally, part of the twin-arginine translocation (Tat) system that transports large folded proteins containing a characteristic twin-arginine motif in their signal peptide across membranes. TatA could form the protein-conducting channel of the Tat system. In Gloeobacter violaceus (strain ATCC 29082 / PCC 7421), this protein is Sec-independent protein translocase protein TatA.